Here is a 327-residue protein sequence, read N- to C-terminus: BarH-like 1 homeobox protein (327 aa).

Disordered stretches follow at residues 1–90, 113–181, and 303–327; these read MEGS…AQSR, PYSS…PRKA, and LQGA…AQPR. Positions 33–54 are enriched in low complexity; sequence RSPLELSPRSESSSDCSSPASP. A compositionally biased stretch (polar residues) spans 79–90; that stretch reads QPGQLSAPAQSR. Composition is skewed to basic and acidic residues over residues 133–143 and 152–166; these read AGEDFRDKLDK and SEYK…EISS. The segment at residues 178 to 237 is a DNA-binding region (homeobox); sequence PRKARTAFTDHQLAQLERSFERQKYLSVQDRMELAASLNLTDTQVKTWYQNRRTKWKRQT. Over residues 308 to 318 the composition is skewed to pro residues; that stretch reads EPPPPLPPLPG.

The protein belongs to the BAR homeobox family.

It localises to the nucleus. The chain is BarH-like 1 homeobox protein (Barhl1) from Mus musculus (Mouse).